Here is a 441-residue protein sequence, read N- to C-terminus: Putative cytochrome P450 138 (441 aa).

Cys388 is a binding site for heme.

This sequence belongs to the cytochrome P450 family. Heme serves as cofactor.

In Mycobacterium bovis (strain ATCC BAA-935 / AF2122/97), this protein is Putative cytochrome P450 138 (cyp138).